We begin with the raw amino-acid sequence, 212 residues long: Glycerol-3-phosphate acyltransferase (212 aa).

Helical transmembrane passes span 3–23 (ILLAALIAYLIGSVSFAVIVS), 51–71 (KAAILTLIGDAFKGWIAVWLA), 78–98 (DVAIAWVAIAVFIGHLYPVFF), 115–135 (AVHPVLGLATALTWLIIAFFF), and 139–159 (SLAALVAAVFAPLFDVFLFGT).

The protein belongs to the PlsY family. In terms of assembly, probably interacts with PlsX.

It localises to the cell inner membrane. The enzyme catalyses an acyl phosphate + sn-glycerol 3-phosphate = a 1-acyl-sn-glycero-3-phosphate + phosphate. The protein operates within lipid metabolism; phospholipid metabolism. Its function is as follows. Catalyzes the transfer of an acyl group from acyl-phosphate (acyl-PO(4)) to glycerol-3-phosphate (G3P) to form lysophosphatidic acid (LPA). This enzyme utilizes acyl-phosphate as fatty acyl donor, but not acyl-CoA or acyl-ACP. This is Glycerol-3-phosphate acyltransferase from Burkholderia multivorans (strain ATCC 17616 / 249).